Here is a 288-residue protein sequence, read N- to C-terminus: Elongation factor Ts (288 aa).

The segment at 79–82 (TDFV) is involved in Mg(2+) ion dislocation from EF-Tu.

The protein belongs to the EF-Ts family.

It is found in the cytoplasm. Its function is as follows. Associates with the EF-Tu.GDP complex and induces the exchange of GDP to GTP. It remains bound to the aminoacyl-tRNA.EF-Tu.GTP complex up to the GTP hydrolysis stage on the ribosome. The chain is Elongation factor Ts from Ehrlichia ruminantium (strain Gardel).